The following is a 211-amino-acid chain: Cytidylate kinase (211 aa).

An ATP-binding site is contributed by 9–17; sequence GPAAAGKGT.

Belongs to the cytidylate kinase family. Type 1 subfamily.

It localises to the cytoplasm. The catalysed reaction is CMP + ATP = CDP + ADP. The enzyme catalyses dCMP + ATP = dCDP + ADP. This chain is Cytidylate kinase, found in Paramagnetospirillum magneticum (strain ATCC 700264 / AMB-1) (Magnetospirillum magneticum).